Consider the following 128-residue polypeptide: Putative esterase aq_1494 (128 aa).

Residue Asp15 is part of the active site.

It belongs to the 4-hydroxybenzoyl-CoA thioesterase family.

The polypeptide is Putative esterase aq_1494 (Aquifex aeolicus (strain VF5)).